The following is a 597-amino-acid chain: Sialic acid-binding Ig-like lectin 12 (597 aa).

The signal sequence occupies residues 1–20 (MLLLLLLLLLPPLLCGRVGA). 2 consecutive Ig-like V-type domains span residues 21–144 (KEQK…VNVT) and 145–271 (ASQD…VHVT). Residues 21 to 483 (KEQKDYLLTM…RPISGVTLGA (463 aa)) lie on the Extracellular side of the membrane. C46 and C106 are joined by a disulfide. N-linked (GlcNAc...) asparagine glycosylation is found at N142, N181, N232, and N292. 3 cysteine pairs are disulfide-bonded: C168/C301, C173/C233, and C295/C344. Positions 277 to 360 (PTFSIPGTLE…AGVTTTRAVR (84 aa)) constitute an Ig-like C2-type 1 domain. 3 N-linked (GlcNAc...) asparagine glycosylation sites follow: N362, N369, and N387. The Ig-like C2-type 2 domain maps to 367 to 464 (PQNLTMTVFQ…GSQHISLSLS (98 aa)). The cysteines at positions 403 and 448 are disulfide-linked. The helical transmembrane segment at 484-504 (VGGAGATALVFLSFCIIFVVV) threads the bilayer. Topologically, residues 505–597 (RSCRKKSARP…YEYSEINILK (93 aa)) are cytoplasmic. The tract at residues 514-558 (PAVGVGDTGMEDTNAVRGSASQGPLIESPADDSPPHHAPPALATP) is disordered. Residues 565–570 (IQYASL) carry the ITIM motif motif. A phosphotyrosine mark is found at Y567 and Y590. The short motif at 588–593 (YEYSEI) is the SLAM-like motif element.

The protein belongs to the immunoglobulin superfamily. SIGLEC (sialic acid binding Ig-like lectin) family.

The protein resides in the membrane. Putative adhesion molecule that mediates sialic-acid dependent binding to cells. The sialic acid recognition site may be masked by cis interactions with sialic acids on the same cell surface. This chain is Sialic acid-binding Ig-like lectin 12 (SIGLEC12), found in Pan troglodytes (Chimpanzee).